Here is a 712-residue protein sequence, read N- to C-terminus: Potassium transporter 1 (712 aa).

Over 1-19 (MNQSPSLIEQGISQQHLKT) the chain is Cytoplasmic. A helical membrane pass occupies residues 20–40 (LSCANVLTLAYQSLGVIYGDL). Topologically, residues 41 to 67 (STSPLYVYKTTFSGKLSLHEDDEEIFG) are extracellular. The helical transmembrane segment at 68 to 88 (VFSFIFWTFTLIALFKYVFIV) threads the bilayer. Topologically, residues 89 to 154 (LSADDNGEGG…FFEKHPKSQK (66 aa)) are cytoplasmic. The chain crosses the membrane as a helical span at residues 155–175 (CLLLFVLLGTCMAIGDSVLTP). The Extracellular portion of the chain corresponds to 176 to 189 (TISVLSAVSGVKLK). The chain crosses the membrane as a helical span at residues 190–210 (IPNLHENYVVIIACIILVAIF). The Cytoplasmic portion of the chain corresponds to 211-219 (SVQRYGTHR). The chain crosses the membrane as a helical span at residues 220 to 240 (VAFIFAPISTAWLLSISSIGV). Residues 241 to 267 (YNTIKWNPRIVSALSPVYMYKFLRSTG) are Extracellular-facing. Residues 268-288 (VEGWVSLGGVVLSITGVETMF) form a helical membrane-spanning segment. Over 289-300 (ADLGHFSSLSIK) the chain is Cytoplasmic. The chain crosses the membrane as a helical span at residues 301-321 (VAFSFFVYPCLILAYMGEAAF). The Extracellular portion of the chain corresponds to 322–340 (LSKHHEDIQQSFYKAIPEP). The chain crosses the membrane as a helical span at residues 341–361 (VFWPVFIVATFAAVVGSQAVI). Residues 362-392 (SATFSIISQCCALDCFPRVKIIHTSSKIHGQ) are Cytoplasmic-facing. Residues 393–413 (IYIPEVNWMLMCLCLAVTIGL) form a helical membrane-spanning segment. The Extracellular portion of the chain corresponds to 414-424 (RDTNMMGHAYG). A helical membrane pass occupies residues 425-445 (LAVTSVMLVTTCLMTLVMTIV). At 446 to 449 (WKQR) the chain is on the cytoplasmic side. The chain crosses the membrane as a helical span at residues 450-470 (IITVLAFVVFFGSIELLYFSS). The Extracellular segment spans residues 471–474 (CVYK). The chain crosses the membrane as a helical span at residues 475–495 (VPEGGWIPILLSLTFMAVMYI). The Cytoplasmic segment spans residues 496 to 712 (WNYGTTKKHE…LLEVGMVYYV (217 aa)).

The protein belongs to the HAK/KUP transporter (TC 2.A.72.3) family. Detected in the whole mature plant but preferentially expressed in roots and stems, and in potassium-starved plants.

It localises to the cell membrane. In terms of biological role, high-affinity potassium transporter that could play a major role in the uptake of potassium from the rhizosphere. May act as a low-affinity potassium transporter under high potassium concentrations. Could also transport rubidium. This is Potassium transporter 1 (POT1) from Arabidopsis thaliana (Mouse-ear cress).